Reading from the N-terminus, the 394-residue chain is Cysteine desulfurase IscS (394 aa).

Pyridoxal 5'-phosphate-binding positions include 72–73 (GT), Asn-152, Gln-180, and 200–202 (SAH). The residue at position 203 (Lys-203) is an N6-(pyridoxal phosphate)lysine. A pyridoxal 5'-phosphate-binding site is contributed by Thr-238. The active-site Cysteine persulfide intermediate is the Cys-326. A [2Fe-2S] cluster-binding site is contributed by Cys-326.

Belongs to the class-V pyridoxal-phosphate-dependent aminotransferase family. NifS/IscS subfamily. As to quaternary structure, homodimer. Forms a heterotetramer with IscU, interacts with other sulfur acceptors. Pyridoxal 5'-phosphate is required as a cofactor.

The protein localises to the cytoplasm. It carries out the reaction (sulfur carrier)-H + L-cysteine = (sulfur carrier)-SH + L-alanine. Its pathway is cofactor biosynthesis; iron-sulfur cluster biosynthesis. In terms of biological role, master enzyme that delivers sulfur to a number of partners involved in Fe-S cluster assembly, tRNA modification or cofactor biosynthesis. Catalyzes the removal of elemental sulfur atoms from cysteine to produce alanine. Functions as a sulfur delivery protein for Fe-S cluster synthesis onto IscU, an Fe-S scaffold assembly protein, as well as other S acceptor proteins. This Dictyoglomus turgidum (strain DSM 6724 / Z-1310) protein is Cysteine desulfurase IscS.